Here is a 397-residue protein sequence, read N- to C-terminus: Acetate kinase (397 aa).

Mg(2+) is bound at residue N8. K15 is an ATP binding site. R92 provides a ligand contact to substrate. D149 serves as the catalytic Proton donor/acceptor. ATP contacts are provided by residues 209–213, 283–285, and 331–335; these read HLGNG, DFR, and GVGEN. E385 lines the Mg(2+) pocket.

It belongs to the acetokinase family. Homodimer. Mg(2+) is required as a cofactor. The cofactor is Mn(2+).

The protein resides in the cytoplasm. The catalysed reaction is acetate + ATP = acetyl phosphate + ADP. The protein operates within metabolic intermediate biosynthesis; acetyl-CoA biosynthesis; acetyl-CoA from acetate: step 1/2. Catalyzes the formation of acetyl phosphate from acetate and ATP. Can also catalyze the reverse reaction. The chain is Acetate kinase from Corynebacterium glutamicum (strain ATCC 13032 / DSM 20300 / JCM 1318 / BCRC 11384 / CCUG 27702 / LMG 3730 / NBRC 12168 / NCIMB 10025 / NRRL B-2784 / 534).